We begin with the raw amino-acid sequence, 178 residues long: Large ribosomal subunit protein uL6 (178 aa).

The protein belongs to the universal ribosomal protein uL6 family. In terms of assembly, part of the 50S ribosomal subunit.

This protein binds to the 23S rRNA, and is important in its secondary structure. It is located near the subunit interface in the base of the L7/L12 stalk, and near the tRNA binding site of the peptidyltransferase center. This Francisella tularensis subsp. tularensis (strain WY96-3418) protein is Large ribosomal subunit protein uL6.